Reading from the N-terminus, the 185-residue chain is Ribosome-recycling factor (185 aa).

It belongs to the RRF family.

It is found in the cytoplasm. Responsible for the release of ribosomes from messenger RNA at the termination of protein biosynthesis. May increase the efficiency of translation by recycling ribosomes from one round of translation to another. The chain is Ribosome-recycling factor from Nitrosomonas europaea (strain ATCC 19718 / CIP 103999 / KCTC 2705 / NBRC 14298).